The primary structure comprises 345 residues: Phosphoribosylformylglycinamidine cyclo-ligase (345 aa).

It belongs to the AIR synthase family.

The protein resides in the cytoplasm. It catalyses the reaction 2-formamido-N(1)-(5-O-phospho-beta-D-ribosyl)acetamidine + ATP = 5-amino-1-(5-phospho-beta-D-ribosyl)imidazole + ADP + phosphate + H(+). It participates in purine metabolism; IMP biosynthesis via de novo pathway; 5-amino-1-(5-phospho-D-ribosyl)imidazole from N(2)-formyl-N(1)-(5-phospho-D-ribosyl)glycinamide: step 2/2. The polypeptide is Phosphoribosylformylglycinamidine cyclo-ligase (Synechococcus sp. (strain CC9902)).